The primary structure comprises 4516 residues: Dynein axonemal heavy chain 1 (4516 aa).

The segment at 1-1748 (MVTLSISDTL…YIRAVNAEFI (1748 aa)) is stem. Residues 78–160 (SSGSDKSLKN…RKSPLAGTDK (83 aa)) are disordered. Basic and acidic residues-rich tracts occupy residues 83–97 (KSLK…KEEA) and 113–129 (ENHD…RNPE). AAA regions lie at residues 1749–1956 (YGYE…VISA), 2016–2249 (QAIR…TTVK), 2422–2682 (TMMP…VFQG), and 2780–2972 (DYNQ…CCTI). Residues 1787–1794 (GPAGTGKT) carry the GPAGTGKT motif motif. 1787 to 1794 (GPAGTGKT) contacts ATP. Residues 1837 to 1843 (CFDEFNR) carry the CFDEFNR motif motif. Residues 2054–2061 (GPTGSGKS), 2460–2467 (GPTGTGKT), and 2819–2826 (GVGGSGRS) each bind ATP. The segment at 2987–3285 (ATRFLHEIPE…MHKYHFVAKA (299 aa)) is stalk. Positions 3293 to 3394 (LREAQDDLEV…QDTVENLENM (102 aa)) form a coiled coil. AAA stretches follow at residues 3388 to 3618 (VENL…EERP) and 3831 to 4050 (LPAF…SYNS).

Belongs to the dynein heavy chain family. In terms of assembly, consists of at least two heavy chains and a number of intermediate and light chains. In terms of tissue distribution, expressed in brain.

It is found in the cytoplasm. The protein resides in the cytoskeleton. The protein localises to the cilium axoneme. Its subcellular location is the cell projection. It localises to the cilium. It is found in the flagellum. Its function is as follows. Force generating protein of cilia required for sperm flagellum motility. Produces force towards the minus ends of microtubules. Dynein has ATPase activity; the force-producing power stroke is thought to occur on release of ADP. Required in spermatozoa for the formation of the inner dynein arms and biogenesis of the axoneme. The sequence is that of Dynein axonemal heavy chain 1 from Rattus norvegicus (Rat).